Here is a 711-residue protein sequence, read N- to C-terminus: Putative membrane protein ActII-3 (711 aa).

A run of 12 helical transmembrane segments spans residues 14–34 (LKWL…PLAG), 175–195 (ADFK…VVTY), 199–219 (LLWL…QAIV), 235–255 (AMIL…LLVA), 281–301 (AIVA…LAAL), 313–333 (VGVL…LVIF), 369–389 (AVWV…VTLN), 516–536 (IIPV…RALV), 540–560 (LLIA…ALFF), 573–593 (FPLW…IFLV), 623–643 (AGLV…VFIA), and 645–665 (LGFT…SVLV). The disordered stretch occupies residues 685–711 (REDPSEDPAVSGMPDSIDSEASTTASR).

The protein belongs to the resistance-nodulation-cell division (RND) (TC 2.A.6) family. MmpL subfamily.

Its subcellular location is the cell membrane. The polypeptide is Putative membrane protein ActII-3 (actII-3) (Streptomyces coelicolor (strain ATCC BAA-471 / A3(2) / M145)).